A 252-amino-acid polypeptide reads, in one-letter code: 3-deoxy-manno-octulosonate cytidylyltransferase (252 aa).

It belongs to the KdsB family.

The protein localises to the cytoplasm. It carries out the reaction 3-deoxy-alpha-D-manno-oct-2-ulosonate + CTP = CMP-3-deoxy-beta-D-manno-octulosonate + diphosphate. The protein operates within nucleotide-sugar biosynthesis; CMP-3-deoxy-D-manno-octulosonate biosynthesis; CMP-3-deoxy-D-manno-octulosonate from 3-deoxy-D-manno-octulosonate and CTP: step 1/1. Its pathway is bacterial outer membrane biogenesis; lipopolysaccharide biosynthesis. Functionally, activates KDO (a required 8-carbon sugar) for incorporation into bacterial lipopolysaccharide in Gram-negative bacteria. This is 3-deoxy-manno-octulosonate cytidylyltransferase from Trichlorobacter lovleyi (strain ATCC BAA-1151 / DSM 17278 / SZ) (Geobacter lovleyi).